Consider the following 324-residue polypeptide: Glutaminase 2 (324 aa).

The substrate site is built by S75, N127, E171, N178, Y202, Y254, and V272.

Belongs to the glutaminase family. As to quaternary structure, homotetramer.

The enzyme catalyses L-glutamine + H2O = L-glutamate + NH4(+). This chain is Glutaminase 2, found in Halalkalibacterium halodurans (strain ATCC BAA-125 / DSM 18197 / FERM 7344 / JCM 9153 / C-125) (Bacillus halodurans).